Consider the following 140-residue polypeptide: Organic hydroperoxide resistance protein-like (140 aa).

This sequence belongs to the OsmC/Ohr family.

The protein is Organic hydroperoxide resistance protein-like of Mycoplasma genitalium (strain ATCC 33530 / DSM 19775 / NCTC 10195 / G37) (Mycoplasmoides genitalium).